A 333-amino-acid polypeptide reads, in one-letter code: Ornithine carbamoyltransferase (333 aa).

Carbamoyl phosphate-binding positions include 57–60 (STRT), glutamine 83, arginine 107, and 134–137 (HPTQ). L-ornithine contacts are provided by residues asparagine 168, aspartate 232, and 236–237 (SM). Residues 274–275 (CL) and arginine 319 each bind carbamoyl phosphate.

Belongs to the aspartate/ornithine carbamoyltransferase superfamily. OTCase family.

It is found in the cytoplasm. The enzyme catalyses carbamoyl phosphate + L-ornithine = L-citrulline + phosphate + H(+). The protein operates within amino-acid biosynthesis; L-arginine biosynthesis; L-arginine from L-ornithine and carbamoyl phosphate: step 1/3. In terms of biological role, reversibly catalyzes the transfer of the carbamoyl group from carbamoyl phosphate (CP) to the N(epsilon) atom of ornithine (ORN) to produce L-citrulline. This Photobacterium profundum (strain SS9) protein is Ornithine carbamoyltransferase.